The sequence spans 438 residues: Glucosamine kinase (438 aa).

ATP is bound by residues lysine 133, 186 to 188 (AYL), and aspartate 193. D-glucosamine is bound at residue aspartate 300. Positions 305, 317, and 319 each coordinate Mg(2+). A Substrate specificity determinant motif motif is present at residues 405 to 420 (QEVREYLYAVRHLPHW). D-glucosamine is bound at residue glutamate 409.

This sequence belongs to the actinobacterial glucosamine kinase family. Monomer. Requires Mg(2+) as cofactor.

The enzyme catalyses D-glucosamine + ATP = D-glucosamine 6-phosphate + ADP + H(+). Catalyzes the ATP-dependent phosphorylation of D-glucosamine (GlcN) to D-glucosamine 6-phosphate. May be involved in the phosphorylation of acquired extracellular GlcN derived from the hydrolysis of chitosan, i.e., in the incorporation of exogenous GlcN into the bacterial GlcNAc metabolism. To a lesser extent, is also active on glucose, but is unable to phosphorylate maltose, 18 other sugars and several aminoglycoside antibiotics. The chain is Glucosamine kinase from Streptacidiphilus jiangxiensis.